The chain runs to 255 residues: 5'-nucleotidase SurE (255 aa).

A divalent metal cation contacts are provided by D8, D9, S40, and N92.

The protein belongs to the SurE nucleotidase family. A divalent metal cation serves as cofactor.

The protein resides in the cytoplasm. The catalysed reaction is a ribonucleoside 5'-phosphate + H2O = a ribonucleoside + phosphate. Its function is as follows. Nucleotidase that shows phosphatase activity on nucleoside 5'-monophosphates. The sequence is that of 5'-nucleotidase SurE from Brucella canis (strain ATCC 23365 / NCTC 10854 / RM-666).